The primary structure comprises 332 residues: Methionine import ATP-binding protein MetN (332 aa).

Residues 2–241 (IELKGLTKVF…PGSRLRELFY (240 aa)) enclose the ABC transporter domain. Residue 38 to 45 (GQSGAGKS) coordinates ATP.

Belongs to the ABC transporter superfamily. Methionine importer (TC 3.A.1.24) family. As to quaternary structure, the complex is composed of two ATP-binding proteins (MetN), two transmembrane proteins (MetI) and a solute-binding protein (MetQ).

It localises to the cell membrane. The enzyme catalyses L-methionine(out) + ATP + H2O = L-methionine(in) + ADP + phosphate + H(+). The catalysed reaction is D-methionine(out) + ATP + H2O = D-methionine(in) + ADP + phosphate + H(+). Functionally, part of the ABC transporter complex MetNIQ involved in methionine import. Responsible for energy coupling to the transport system. The sequence is that of Methionine import ATP-binding protein MetN from Symbiobacterium thermophilum (strain DSM 24528 / JCM 14929 / IAM 14863 / T).